A 128-amino-acid chain; its full sequence is Glycine cleavage system H protein 2 (128 aa).

The Lipoyl-binding domain occupies 24–105 (TVTVGISDHA…PYSAWIFKVK (82 aa)). Lys-65 is subject to N6-lipoyllysine.

It belongs to the GcvH family. In terms of assembly, the glycine cleavage system is composed of four proteins: P, T, L and H. It depends on (R)-lipoate as a cofactor.

Functionally, the glycine cleavage system catalyzes the degradation of glycine. The H protein shuttles the methylamine group of glycine from the P protein to the T protein. The chain is Glycine cleavage system H protein 2 from Pseudomonas syringae pv. tomato (strain ATCC BAA-871 / DC3000).